We begin with the raw amino-acid sequence, 536 residues long: Thiamine transport system permease protein ThiP (536 aa).

12 helical membrane-spanning segments follow: residues 12–32 (WLIPGVSATTLVVAVALAAFL), 58–78 (FSFWQAFLSALLSVIPAIFLA), 95–115 (LCAMTLILPVLVAVFGILSVY), 134–154 (FSPYGLQGILLAHVFFNLPMA), 199–219 (VAALIFMLCFASFATVLSLGG), 240–260 (PARAAMLALLQMVCCLGLVLL), 293–313 (VLIVLALLLLLPPLLAVIVDG), 334–354 (SLRIALAAGVLCVVLTMMLLW), 374–394 (SGMLILAMPGIVLATGFFLLL), 404–424 (ADGIVIFTNALMAIPYALKVL), 463–483 (AQALAFACVLSIGDFGVVALF), and 506–526 (DGAVTALILLLLCFLLFTVIE). Residues 56–261 (VRFSFWQAFL…VCCLGLVLLS (206 aa)) enclose the ABC transmembrane type-1 1 domain. The 195-residue stretch at 331 to 525 (LWTSLRIALA…LLCFLLFTVI (195 aa)) folds into the ABC transmembrane type-1 2 domain.

This sequence belongs to the binding-protein-dependent transport system permease family. CysTW subfamily. The complex is composed of two ATP-binding proteins (ThiQ), two transmembrane proteins (ThiP) and a solute-binding protein (ThiB).

The protein localises to the cell inner membrane. Transport is inhibited by the sulfhydryl-specific modifier N-ethylmaleimide. Part of the ABC transporter complex ThiBPQ involved in thiamine import. Probably responsible for the translocation of the substrate across the membrane. This Escherichia coli (strain K12) protein is Thiamine transport system permease protein ThiP (thiP).